Here is a 251-residue protein sequence, read N- to C-terminus: tRNA-cytidine(32) 2-sulfurtransferase 1 (251 aa).

Residues 33–38 (SGGKDS) carry the PP-loop motif motif. [4Fe-4S] cluster contacts are provided by Cys-108, Cys-111, and Cys-199.

This sequence belongs to the TtcA family. In terms of assembly, homodimer. It depends on Mg(2+) as a cofactor. [4Fe-4S] cluster is required as a cofactor.

The protein localises to the cytoplasm. The enzyme catalyses cytidine(32) in tRNA + S-sulfanyl-L-cysteinyl-[cysteine desulfurase] + AH2 + ATP = 2-thiocytidine(32) in tRNA + L-cysteinyl-[cysteine desulfurase] + A + AMP + diphosphate + H(+). Its pathway is tRNA modification. Its function is as follows. Catalyzes the ATP-dependent 2-thiolation of cytidine in position 32 of tRNA, to form 2-thiocytidine (s(2)C32). The sulfur atoms are provided by the cysteine/cysteine desulfurase (IscS) system. This chain is tRNA-cytidine(32) 2-sulfurtransferase 1, found in Francisella tularensis subsp. holarctica (strain FTNF002-00 / FTA).